The following is a 124-amino-acid chain: Small ribosomal subunit protein uS12 (124 aa).

Residues 1–32 form a disordered region; that stretch reads MPTIQQLVRKGRKDKATKTKTPALKGSPQRRG. Asp-89 bears the 3-methylthioaspartic acid mark. The tract at residues 105 to 124 is disordered; it reads QGVRGRQQARSRYGAKKEKK. The span at 111–124 shows a compositional bias: basic residues; sequence QQARSRYGAKKEKK.

This sequence belongs to the universal ribosomal protein uS12 family. As to quaternary structure, part of the 30S ribosomal subunit. Contacts proteins S8 and S17. May interact with IF1 in the 30S initiation complex.

With S4 and S5 plays an important role in translational accuracy. In terms of biological role, interacts with and stabilizes bases of the 16S rRNA that are involved in tRNA selection in the A site and with the mRNA backbone. Located at the interface of the 30S and 50S subunits, it traverses the body of the 30S subunit contacting proteins on the other side and probably holding the rRNA structure together. The combined cluster of proteins S8, S12 and S17 appears to hold together the shoulder and platform of the 30S subunit. In Beutenbergia cavernae (strain ATCC BAA-8 / DSM 12333 / CCUG 43141 / JCM 11478 / NBRC 16432 / NCIMB 13614 / HKI 0122), this protein is Small ribosomal subunit protein uS12.